Here is a 550-residue protein sequence, read N- to C-terminus: Calcyphosin-2 (550 aa).

2 disordered regions span residues 1–20 (MVPP…DNFS) and 175–198 (ISDP…DSER). Residues 181 to 190 (DLNTKNQESS) show a composition bias toward polar residues. 3 consecutive EF-hand domains span residues 379–414 (RILT…FHLE), 415–452 (VSEQ…EMNE), and 453–488 (YRKS…KKHP). Residues D466, N468, T470, and D477 each coordinate Ca(2+).

This Mus musculus (Mouse) protein is Calcyphosin-2 (Caps2).